The sequence spans 64 residues: Disintegrin lebein-1-beta (64 aa).

The region spanning 1-64 (NSGNPCCDPV…SDCPRNPYKD (64 aa)) is the Disintegrin domain. 4 cysteine pairs are disulfide-bonded: cysteine 6/cysteine 29, cysteine 20/cysteine 26, cysteine 25/cysteine 50, and cysteine 38/cysteine 57. Residues 42 to 44 (RGD) carry the Cell attachment site motif.

Belongs to the disintegrin family. Dimeric disintegrin subfamily. Heterodimer with subunit alpha; disulfide-linked. Expressed by the venom gland.

Its subcellular location is the secreted. Functionally, strongly inhibits ADP-induced platelet aggregation on human platelet-rich plasma. Also avidly binds to the laminin-binding beta-1 integrins (alpha-3/beta-1, alpha-6/beta-1, and alpha-7/beta-1) in an RGD-independent manner. The protein is Disintegrin lebein-1-beta of Macrovipera lebetinus (Levantine viper).